The following is a 397-amino-acid chain: MADLGCKKPSDCTVSRLLSVVESELRAGRDKGDPTEKQLQVVLEDAPLWQRFREVTNEMIVTKNGRRMFPVLKISVSGLDPNAMYSFLLDFAPTDGHRWKYVNGEWVPAGKPEPPNHSCVYIHPDSPNFGAHWMKAAISFSKVKLTNKLNGSGQIMLNSLHKYEPQVHIVRVGGPHRMVMNCSFPETQFIAVTAYQNEEITALKIKYNPFAKAFLDAKERNHPKDAPEAASEGQHMTYSHSPQAPHGCERYSALRGHRAAPYPPSYMQRNHSPTVNFFESSSNNLQVFSGHDSWTLPSSPHANLLSVPHTKGATSPGPSHYPCLWPVSNSAVSVTNPGSEVNSNTSSMFLRGNVPLPTASSSVQIPLQATVSGGMETQGEAPLVRLADSAWTSSHSF.

Residues 48 to 216 constitute a DNA-binding region (T-box); sequence LWQRFREVTN…YNPFAKAFLD (169 aa). Residues 220–248 form a disordered region; the sequence is RNHPKDAPEAASEGQHMTYSHSPQAPHGC.

It localises to the nucleus. Its function is as follows. May be involved in the initial formation of the chordamesoderm. The sequence is that of T-box transcription factor TBX19 from Gallus gallus (Chicken).